The sequence spans 357 residues: Serine proteinase inhibitor 1 (357 aa).

It belongs to the serpin family. Poxviruses subfamily.

The protein resides in the host cytoplasm. Plays a role in mediating viral host range. May act to inhibit a caspase independent form of apoptosis to allow efficient virus replication in infected cells. The protein is Serine proteinase inhibitor 1 (OPG208) of Monkeypox virus.